The chain runs to 104 residues: MSKYYILIELMNDKKNTNSSCDIFSFYLNFSDNPFSSFRLKSRLLYGIFSCFLLFYSLKDLIGVFKQKYLYLSILLLWLLVLLFCLAKGLSHNLRADSFLQYPL.

A run of 2 helical transmembrane segments spans residues 45–65 (LYGI…IGVF) and 70–90 (LYLS…AKGL).

It localises to the membrane. This is an uncharacterized protein from Saccharomyces cerevisiae (strain ATCC 204508 / S288c) (Baker's yeast).